The sequence spans 321 residues: tRNA U34 carboxymethyltransferase (321 aa).

Residues K90, W104, K109, G129, 151–153 (DPT), 180–181 (IE), M195, Y199, and R314 each bind carboxy-S-adenosyl-L-methionine.

Belongs to the class I-like SAM-binding methyltransferase superfamily. CmoB family. Homotetramer.

The catalysed reaction is carboxy-S-adenosyl-L-methionine + 5-hydroxyuridine(34) in tRNA = 5-carboxymethoxyuridine(34) in tRNA + S-adenosyl-L-homocysteine + H(+). Functionally, catalyzes carboxymethyl transfer from carboxy-S-adenosyl-L-methionine (Cx-SAM) to 5-hydroxyuridine (ho5U) to form 5-carboxymethoxyuridine (cmo5U) at position 34 in tRNAs. This Haemophilus influenzae (strain 86-028NP) protein is tRNA U34 carboxymethyltransferase.